The following is a 1608-amino-acid chain: Adenylate cyclase type 10 (1608 aa).

Guanylate cyclase domains are found at residues 42-179 (VLMF…RLAQ) and 293-418 (TIVF…ARMM). Aspartate 47 and isoleucine 48 together coordinate Mg(2+). Residue 47 to 52 (DISGFT) coordinates ATP. Lysine 95 is a hydrogencarbonate binding site. Position 99 (aspartate 99) interacts with Mg(2+). Residues aspartate 99 and lysine 144 each coordinate ATP. Valine 167, arginine 176, and methionine 337 together coordinate hydrogencarbonate. ATP contacts are provided by residues valine 406 and 412 to 416 (NIAAR).

This sequence belongs to the adenylyl cyclase class-4/guanylyl cyclase family. The cofactor is Mg(2+). Requires Mn(2+) as cofactor. Post-translationally, cleavage may occur to generate the active 48 kDa form. Detected in testis (at protein level). Preferentially expressed in testis.

It localises to the cell membrane. Its subcellular location is the cytoplasm. It is found in the cytoskeleton. The protein localises to the perinuclear region. The protein resides in the nucleus. It localises to the cell projection. Its subcellular location is the cilium. It is found in the mitochondrion. The catalysed reaction is ATP = 3',5'-cyclic AMP + diphosphate. Its activity is regulated as follows. Activated by manganese or magnesium ions. In the presence of magnesium ions, the enzyme is activated by bicarbonate. Calcium mildly increases the enzyme activity, also in the presence of magnesium ions. Functionally, catalyzes the formation of the signaling molecule cAMP. May function as sensor that mediates responses to changes in cellular bicarbonate and CO(2) levels. Has a critical role in mammalian spermatogenesis by producing the cAMP which regulates cAMP-responsive nuclear factors indispensable for sperm maturation in the epididymis. Induces capacitation, the maturational process that sperm undergo prior to fertilization. Involved in ciliary beat regulation. The protein is Adenylate cyclase type 10 (Adcy10) of Rattus norvegicus (Rat).